The primary structure comprises 70 residues: Consomatin Mrc3 (70 aa).

A signal peptide spans 1–22; that stretch reads MQTAYWVMVMMMVWITAPLSEG. A propeptide spanning residues 23-55 is cleaved from the precursor; sequence GKLNDVIRGLVPDDVTPKRILQSLISRRRFDGR. Cys-62 and Cys-67 are disulfide-bonded. Position 64 is a D-tryptophan (Trp-64). Residue Pro-68 is modified to 4-hydroxyproline. Tyr-69 bears the Tyrosine amide mark.

The protein belongs to the conotoxin C superfamily. Consomatin family. In terms of tissue distribution, expressed by the venom duct.

The protein localises to the secreted. Moderately activates human somatostatin receptors (SSTR) with a preferential activation of SSTR1 and SSTR4. In vivo, does not cause behavioral changes in mice within a few minutes of intracranial injection, but causes a progressive loss of movement thereafter. Four to five hours after injection, mice recover, even with the highest dose tested. Shows antinociception and antihyperalgesia activities in two mouse models of acute pain, most probably by acting outside the central nervous system. This is Consomatin Mrc3 from Conus mercator (Trader cone).